We begin with the raw amino-acid sequence, 1322 residues long: Chitin synthase chs-1 (1322 aa).

Over 1–39 the chain is Extracellular; it reads MNDGENYWNAFRSHKRSATDGPTLSPWMVTVLQATKLLL. The chain crosses the membrane as a helical span at residues 40 to 60; sequence FALCNIVLTLGSVFSKLIVLI. At 61–128 the chain is on the cytoplasmic side; that stretch reads MATNIVPRAH…KGQCGQLVKS (68 aa). The helical transmembrane segment at 129–149 threads the bilayer; the sequence is VVVLESLRAIGLAVLSFHVFP. Residues 150–156 lie on the Extracellular side of the membrane; the sequence is QLDLARC. The chain crosses the membrane as a helical span at residues 157 to 177; that stretch reads LVLSACFPLVAVLQRSLVAMV. Residues 178 to 193 lie on the Cytoplasmic side of the membrane; the sequence is SAARTGRSFRNRLGRC. A helical transmembrane segment spans residues 194-214; it reads FVAIPHVIMFLVLMSSCYVWA. At 215 to 221 the chain is on the extracellular side; the sequence is LFDNKFT. The helical transmembrane segment at 222-242 threads the bilayer; it reads AIIALPIGVICTSAGFWESWI. Over 243–269 the chain is Cytoplasmic; the sequence is DTTHSGTSFDELYRLKYAVRKMNTTTK. A helical membrane pass occupies residues 270 to 290; the sequence is LIVSLMRIVCTVSVLVSAVYI. At 291-316 the chain is on the extracellular side; sequence NDHKKLNSSHFVKAFFSFSTRQPHTR. N-linked (GlcNAc...) asparagine glycosylation is present at Asn297. A helical transmembrane segment spans residues 317–337; sequence LLLLATGIIVLHFVMRGISRF. Residues 338-342 are Cytoplasmic-facing; it reads LAALD. A helical membrane pass occupies residues 343-363; sequence LHPFSFVHPLSIAPLIAYGYV. At 364–396 the chain is on the extracellular side; it reads RYACQSPTCSIARRLARFGLHWVCDQWFQSARG. Residues 397-417 form a helical membrane-spanning segment; it reads IASPDFYICLIWLLVGCYRGW. Topologically, residues 418–836 are cytoplasmic; that stretch reads RLVRQRYFDT…AISYAYIAYQ (419 aa). A coiled-coil region spans residues 455 to 486; that stretch reads LNRQEKTMLTEEEDISDENDELRIRNDEVDRV. A helical transmembrane segment spans residues 837–857; sequence FLVIFFSMLGPAIIFTMLVFA. Topologically, residues 858–865 are extracellular; it reads QVAAFELR. A helical membrane pass occupies residues 866-886; it reads GSDVMLYNGIPIGFFIVLCFT. At 887 to 892 the chain is on the cytoplasmic side; it reads TESNIQ. The chain crosses the membrane as a helical span at residues 893–913; the sequence is LIYAKYMSIAYAFVMLAVLVA. Over 914–922 the chain is Extracellular; the sequence is TSSQIVLET. The chain crosses the membrane as a helical span at residues 923–943; it reads VLAPTSLFIVTMVGIFFFAAC. Topologically, residues 944–951 are cytoplasmic; that stretch reads LHPKEFTN. A helical transmembrane segment spans residues 952–972; that stretch reads IIHGVVFFLMIPSTYVFLTLY. Over 973 to 1148 the chain is Extracellular; it reads SLINLNVITW…AVAEGLASLR (176 aa). Residues 1019 to 1053 adopt a coiled-coil conformation; sequence ISCREKKEHEERREKMEKKMQRMELALRSIESGAD. A helical membrane pass occupies residues 1149 to 1169; that stretch reads NQIAFTILLVNSLLALAIFLI. The Cytoplasmic portion of the chain corresponds to 1170-1209; the sequence is QKHKNVLSIKFSPIKNFRWTKMNEMTGQYEETDEPLKIDP. A helical transmembrane segment spans residues 1210 to 1230; sequence LGMGIVVFLLIILFVQTLGML. The Extracellular portion of the chain corresponds to 1231-1322; the sequence is LHRLNTMIGA…MQRSALSTTE (92 aa).

The protein belongs to the chitin synthase family. Class IV subfamily.

Its subcellular location is the cell membrane. It catalyses the reaction [(1-&gt;4)-N-acetyl-beta-D-glucosaminyl](n) + UDP-N-acetyl-alpha-D-glucosamine = [(1-&gt;4)-N-acetyl-beta-D-glucosaminyl](n+1) + UDP + H(+). In terms of biological role, essential for the embryonic synthesis of chitin, a component of the eggshell. The chain is Chitin synthase chs-1 from Caenorhabditis elegans.